We begin with the raw amino-acid sequence, 97 residues long: uncharacterized protein (97 aa).

The N-terminal stretch at 1-21 (MLLHGLGRMNIIFICFPSLAC) is a signal peptide.

This is an uncharacterized protein from Schizosaccharomyces pombe (strain 972 / ATCC 24843) (Fission yeast).